The following is a 572-amino-acid chain: E3 SUMO-protein ligase PIAS2 (572 aa).

In terms of domain architecture, SAP spans 11–45; it reads VSSFRVSELQVLLGFAGRNKSGRKHDLLMRALHLL. Positions 19–23 match the LXXLL motif motif; sequence LQVLL. Residues lysine 46 and lysine 249 each participate in a glycyl lysine isopeptide (Lys-Gly) (interchain with G-Cter in SUMO2) cross-link. The region spanning 134-299 is the PINIT domain; the sequence is QPSPPIPPVH…SMSVYLVRQL (166 aa). The SP-RING-type zinc-finger motif lies at 331 to 412; the sequence is PDSEIATTSL…FMEILNDCSD (82 aa). The Zn(2+) site is built by cysteine 362, histidine 364, cysteine 385, and cysteine 388. Residues lysine 430, lysine 435, lysine 443, and lysine 452 each participate in a glycyl lysine isopeptide (Lys-Gly) (interchain with G-Cter in SUMO2) cross-link. Residues 467–473 form an SUMO1-binding region; the sequence is IDVIDLT. Phosphoserine occurs at positions 476, 477, and 478. Residues 484-492 carry the Nuclear localization signal motif; the sequence is PPAKRKCIF. Lysine 489 participates in a covalent cross-link: Glycyl lysine isopeptide (Lys-Gly) (interchain with G-Cter in SUMO2). Serine 499 bears the Phosphoserine mark. Residue lysine 502 forms a Glycyl lysine isopeptide (Lys-Gly) (interchain with G-Cter in SUMO2) linkage. The disordered stretch occupies residues 523–572; sequence AAIPPSLTDYSVPFHHTPVSSMSSDLPGEQRRNDINNEVQLGTSSDTVQQ. Over residues 558–572 the composition is skewed to polar residues; that stretch reads NNEVQLGTSSDTVQQ.

Belongs to the PIAS family. Binds SUMO1 and UBE2I. Interacts with AXIN1, JUN, MDM2, PARK7, TP53 and TP73 isoform alpha, but not TP73 isoform beta. Interacts with STAT4 following IL12 and IFN-alpha stimulation of T-cells. Interacts also with GTF2I, GTF2IRD1, IKFZ1, DAB2 and MSX2, as well as with several steroid receptors, including ESR1, ESR2, NR3C1, PGR, AR, and with NCOA2. Sumoylation of a target protein seems to enhance the interaction. Binds to sumoylated ELK1. Binds DNA, such as CDKN1A promoter, in a sequence-specific manner. Interacts with PLAG1. Interacts with KLF8; the interaction results in SUMO ligation and repression of KLF8 transcriptional activity and of its cell cycle progression into G(1) phase. Interacts with IFIH1/MDA5. Interacts with PML. Interacts with PRDM1. Post-translationally, sumoylated. As to expression, mainly expressed in testis.

Its subcellular location is the nucleus speckle. The protein localises to the nucleus. It localises to the PML body. The protein operates within protein modification; protein sumoylation. In terms of biological role, functions as an E3-type small ubiquitin-like modifier (SUMO) ligase, stabilizing the interaction between UBE2I and the substrate, and as a SUMO-tethering factor. Plays a crucial role as a transcriptional coregulation in various cellular pathways, including the STAT pathway, the p53 pathway and the steroid hormone signaling pathway. The effects of this transcriptional coregulation, transactivation or silencing may vary depending upon the biological context and PIAS2 isoform studied. However, it seems to be mostly involved in gene silencing. Binds to sumoylated ELK1 and enhances its transcriptional activity by preventing recruitment of HDAC2 by ELK1, thus reversing SUMO-mediated repression of ELK1 transactivation activity. Sumoylates PML at'Lys-65' and 'Lys-160'. The polypeptide is E3 SUMO-protein ligase PIAS2 (Pias2) (Rattus norvegicus (Rat)).